We begin with the raw amino-acid sequence, 420 residues long: Glucose-1-phosphate adenylyltransferase (420 aa).

Residues Y107, G173, 188-189 (EK), and S206 contribute to the alpha-D-glucose 1-phosphate site.

It belongs to the bacterial/plant glucose-1-phosphate adenylyltransferase family. In terms of assembly, homotetramer.

The enzyme catalyses alpha-D-glucose 1-phosphate + ATP + H(+) = ADP-alpha-D-glucose + diphosphate. It participates in glycan biosynthesis; glycogen biosynthesis. Functionally, involved in the biosynthesis of ADP-glucose, a building block required for the elongation reactions to produce glycogen. Catalyzes the reaction between ATP and alpha-D-glucose 1-phosphate (G1P) to produce pyrophosphate and ADP-Glc. In Shewanella sp. (strain MR-4), this protein is Glucose-1-phosphate adenylyltransferase.